The sequence spans 438 residues: GTPase Der (438 aa).

EngA-type G domains follow at residues 4–168 and 177–352; these read PIVA…PEGN and IRIA…GNYC. GTP contacts are provided by residues 10–17, 57–61, 120–123, 183–190, 230–234, and 295–298; these read GRPNVGKS, DTGGI, NKID, DTAGL, and NKWD. The KH-like domain occupies 353 to 437; it reads KRIKTGILND…GIKLEFRERK (85 aa).

This sequence belongs to the TRAFAC class TrmE-Era-EngA-EngB-Septin-like GTPase superfamily. EngA (Der) GTPase family. In terms of assembly, associates with the 50S ribosomal subunit.

GTPase that plays an essential role in the late steps of ribosome biogenesis. The polypeptide is GTPase Der (Clostridium novyi (strain NT)).